The primary structure comprises 82 residues: Large ribosomal subunit protein uL23 (82 aa).

It belongs to the universal ribosomal protein uL23 family. As to quaternary structure, part of the 50S ribosomal subunit. Contacts protein L29.

In terms of biological role, binds to 23S rRNA. One of the proteins that surrounds the polypeptide exit tunnel on the outside of the ribosome. This Sulfurisphaera tokodaii (strain DSM 16993 / JCM 10545 / NBRC 100140 / 7) (Sulfolobus tokodaii) protein is Large ribosomal subunit protein uL23.